The chain runs to 115 residues: Large ribosomal subunit protein P2z (115 aa).

The disordered stretch occupies residues 62 to 115 (LASVPSGGGGGVAVASATSGGGGGGGAPAAESKKEEKKEEKEESDDDMGFSLFE). Basic and acidic residues predominate over residues 92–102 (ESKKEEKKEEK). Phosphoserine is present on Ser-105.

This sequence belongs to the eukaryotic ribosomal protein P1/P2 family. In terms of assembly, P1 and P2 exist as dimers at the large ribosomal subunit. Phosphorylated.

Its function is as follows. Plays an important role in the elongation step of protein synthesis. This Arabidopsis thaliana (Mouse-ear cress) protein is Large ribosomal subunit protein P2z (RPP2A).